Consider the following 503-residue polypeptide: MTLGSPRRGLLMLLMALVTQGDPVKPSRGPLVTCTCESPHCRGPTCRGAWCTVVLVREEGRHPQEHRGCGNLHRELCRGRPTEFVNHYCCDSHLCNHNVSLVLEATQSPSEQPGTDGQLALILGPVLALLALVALGVLGLWHVRRRQEKQRGLHSELGESSLILKASEQGDSMLGDLLDSDCTTGSGSGLPFLVQRTVARQVALVECVGKGRYGEVWRGLWHGESVAVKIFSSRDEQSWFRETEIYNTVLLRHDNILGFIASDMTSRNSSTQLWLITHYHEHGSLYDFLQRQTLEPHLALRLTVSAACGLAHLHVEIFGTQGKPAIAHRDFKSRNVLVKSNLQCCIADLGLAVMHSQGSDYLDIGNNPRVGTKRYMAPEVLDEQIRTDCFESYKWTDIWAFGLVLWEIARRTIVNGIVEDYRPPFYDVVPNDPSFEDMKKVVCVDQQTPTIPNRLAADPVLSGLAQMMRECWYPNPSARLTALRIKKTLQKISNSPEKPKVIQ.

An N-terminal signal peptide occupies residues 1–21; sequence MTLGSPRRGLLMLLMALVTQG. Over 22–118 the chain is Extracellular; that stretch reads DPVKPSRGPL…PSEQPGTDGQ (97 aa). 3 cysteine pairs are disulfide-bonded: cysteine 34/cysteine 51, cysteine 36/cysteine 41, and cysteine 46/cysteine 69. The tract at residues 73–76 is mediates specificity for BMP ligand; that stretch reads HREL. 2 disulfide bridges follow: cysteine 77-cysteine 89 and cysteine 90-cysteine 95. An N-linked (GlcNAc...) asparagine glycan is attached at asparagine 98. A helical membrane pass occupies residues 119–141; sequence LALILGPVLALLALVALGVLGLW. The Cytoplasmic portion of the chain corresponds to 142 to 503; the sequence is HVRRRQEKQR…NSPEKPKVIQ (362 aa). Phosphoserine occurs at positions 155, 160, and 161. Positions 172-201 constitute a GS domain; the sequence is SMLGDLLDSDCTTGSGSGLPFLVQRTVARQ. One can recognise a Protein kinase domain in the interval 202–492; sequence VALVECVGKG…LRIKKTLQKI (291 aa). Residues 208-216 and lysine 229 contribute to the ATP site; that span reads VGKGRYGEV. Aspartate 330 (proton acceptor) is an active-site residue.

Belongs to the protein kinase superfamily. TKL Ser/Thr protein kinase family. TGFB receptor subfamily. In terms of assembly, interacts with TSC22D1/TSC-22. Requires Mg(2+) as cofactor. Mn(2+) is required as a cofactor.

Its subcellular location is the cell membrane. It carries out the reaction L-threonyl-[receptor-protein] + ATP = O-phospho-L-threonyl-[receptor-protein] + ADP + H(+). The catalysed reaction is L-seryl-[receptor-protein] + ATP = O-phospho-L-seryl-[receptor-protein] + ADP + H(+). Functionally, type I receptor for TGF-beta family ligands BMP9/GDF2 and BMP10 and important regulator of normal blood vessel development. On ligand binding, forms a receptor complex consisting of two type II and two type I transmembrane serine/threonine kinases. Type II receptors phosphorylate and activate type I receptors which autophosphorylate, then bind and activate SMAD transcriptional regulators. May bind activin as well. The protein is Activin receptor type-1-like (ACVRL1) of Pongo abelii (Sumatran orangutan).